Here is a 291-residue protein sequence, read N- to C-terminus: Small ribosomal subunit biogenesis GTPase RsgA (291 aa).

Positions 63–221 (ENELKRPPVS…IADTPGFSAL (159 aa)) constitute a CP-type G domain. GTP contacts are provided by residues 112 to 115 (TKKD) and 164 to 172 (GQSGVGKST). Zn(2+) contacts are provided by C245, C250, H252, and C258.

Belongs to the TRAFAC class YlqF/YawG GTPase family. RsgA subfamily. As to quaternary structure, monomer. Associates with 30S ribosomal subunit, binds 16S rRNA. It depends on Zn(2+) as a cofactor.

The protein localises to the cytoplasm. In terms of biological role, one of several proteins that assist in the late maturation steps of the functional core of the 30S ribosomal subunit. Helps release RbfA from mature subunits. May play a role in the assembly of ribosomal proteins into the subunit. Circularly permuted GTPase that catalyzes slow GTP hydrolysis, GTPase activity is stimulated by the 30S ribosomal subunit. In Staphylococcus aureus (strain COL), this protein is Small ribosomal subunit biogenesis GTPase RsgA.